The sequence spans 428 residues: Bifunctional protein GlmU (428 aa).

Residues 1–221 (MDIVILAAGC…ERKAMGINTR (221 aa)) form a pyrophosphorylase region. UDP-N-acetyl-alpha-D-glucosamine contacts are provided by residues 6 to 9 (LAAG), Lys-20, Gln-74, 79 to 80 (GT), 103 to 105 (YGD), Gly-140, and Asn-219. Asp-105 contributes to the Mg(2+) binding site. Residue Asn-219 participates in Mg(2+) binding. Residues 222–242 (ADLAIAESYFQCMKRASFLQS) are linker. The segment at 243–428 (GVTLTSPDQV…TTKPEYKTRR (186 aa)) is N-acetyltransferase. UDP-N-acetyl-alpha-D-glucosamine is bound by residues Arg-308 and Lys-326. His-338 (proton acceptor) is an active-site residue. UDP-N-acetyl-alpha-D-glucosamine contacts are provided by Tyr-341 and Asn-352. Acetyl-CoA-binding positions include Ala-355, 361–362 (NY), Ala-398, and Arg-415.

This sequence in the N-terminal section; belongs to the N-acetylglucosamine-1-phosphate uridyltransferase family. It in the C-terminal section; belongs to the transferase hexapeptide repeat family. As to quaternary structure, homotrimer. Mg(2+) serves as cofactor.

The protein resides in the cytoplasm. The enzyme catalyses alpha-D-glucosamine 1-phosphate + acetyl-CoA = N-acetyl-alpha-D-glucosamine 1-phosphate + CoA + H(+). It catalyses the reaction N-acetyl-alpha-D-glucosamine 1-phosphate + UTP + H(+) = UDP-N-acetyl-alpha-D-glucosamine + diphosphate. It participates in nucleotide-sugar biosynthesis; UDP-N-acetyl-alpha-D-glucosamine biosynthesis; N-acetyl-alpha-D-glucosamine 1-phosphate from alpha-D-glucosamine 6-phosphate (route II): step 2/2. Its pathway is nucleotide-sugar biosynthesis; UDP-N-acetyl-alpha-D-glucosamine biosynthesis; UDP-N-acetyl-alpha-D-glucosamine from N-acetyl-alpha-D-glucosamine 1-phosphate: step 1/1. It functions in the pathway bacterial outer membrane biogenesis; LPS lipid A biosynthesis. Catalyzes the last two sequential reactions in the de novo biosynthetic pathway for UDP-N-acetylglucosamine (UDP-GlcNAc). The C-terminal domain catalyzes the transfer of acetyl group from acetyl coenzyme A to glucosamine-1-phosphate (GlcN-1-P) to produce N-acetylglucosamine-1-phosphate (GlcNAc-1-P), which is converted into UDP-GlcNAc by the transfer of uridine 5-monophosphate (from uridine 5-triphosphate), a reaction catalyzed by the N-terminal domain. The sequence is that of Bifunctional protein GlmU from Anaplasma marginale (strain Florida).